The following is a 39-amino-acid chain: QKKGFCAGYCSYSCAKTDEWTFHQTCGKMYCCIPPPKKG.

Gln-1 is modified (pyrrolidone carboxylic acid). 3 disulfides stabilise this stretch: Cys-6-Cys-32, Cys-10-Cys-26, and Cys-14-Cys-31.

It localises to the secreted. This chain is Small basic protein 1, found in Anas platyrhynchos (Mallard).